Reading from the N-terminus, the 67-residue chain is MPKLKTRKAAAKRFEATGSGKKIKRRKAFKNHLLDHKSAERKRRRLSQITLVHERDEKEVRLMLPYL.

Basic residues predominate over residues 1–11 (MPKLKTRKAAA). Residues 1–22 (MPKLKTRKAAAKRFEATGSGKK) are disordered.

It belongs to the bacterial ribosomal protein bL35 family.

This is Large ribosomal subunit protein bL35 from Microcystis aeruginosa (strain NIES-843 / IAM M-2473).